A 101-amino-acid polypeptide reads, in one-letter code: Putative metal transport protein HQ_3622A (101 aa).

Positions 1–32 (MKIISMSMDSWIQRAALMLLGLVIVAPFFGWT) are cleaved as a signal peptide. The helical transmembrane segment at 75–95 (IGTLISAGVGTVLTLIVAFGA) threads the bilayer.

Its subcellular location is the cell membrane. Functionally, may be involved in metal transport. This is Putative metal transport protein HQ_3622A from Haloquadratum walsbyi (strain DSM 16790 / HBSQ001).